A 379-amino-acid chain; its full sequence is Cytochrome b (379 aa).

4 helical membrane-spanning segments follow: residues 33 to 53 (FGSL…FLAM), 77 to 98 (WLIR…YIHI), 113 to 133 (WNIG…GYVL), and 178 to 198 (FFAF…VHLL). The heme b site is built by His83 and His97. His182 and His196 together coordinate heme b. His201 lines the a ubiquinone pocket. A run of 4 helical transmembrane segments spans residues 226 to 246 (TKDF…VLYF), 288 to 308 (LGGV…PYIH), 320 to 340 (ISQF…WIGG), and 347 to 367 (FIII…IXMX).

Belongs to the cytochrome b family. As to quaternary structure, the cytochrome bc1 complex contains 11 subunits: 3 respiratory subunits (MT-CYB, CYC1 and UQCRFS1), 2 core proteins (UQCRC1 and UQCRC2) and 6 low-molecular weight proteins (UQCRH/QCR6, UQCRB/QCR7, UQCRQ/QCR8, UQCR10/QCR9, UQCR11/QCR10 and a cleavage product of UQCRFS1). This cytochrome bc1 complex then forms a dimer. Heme b is required as a cofactor.

The protein localises to the mitochondrion inner membrane. Functionally, component of the ubiquinol-cytochrome c reductase complex (complex III or cytochrome b-c1 complex) that is part of the mitochondrial respiratory chain. The b-c1 complex mediates electron transfer from ubiquinol to cytochrome c. Contributes to the generation of a proton gradient across the mitochondrial membrane that is then used for ATP synthesis. The sequence is that of Cytochrome b (MT-CYB) from Thomomys umbrinus (Southern pocket gopher).